A 71-amino-acid chain; its full sequence is Small ribosomal subunit protein bS21 (71 aa).

The protein belongs to the bacterial ribosomal protein bS21 family.

This chain is Small ribosomal subunit protein bS21, found in Photobacterium profundum (strain SS9).